The chain runs to 441 residues: Glutamyl-tRNA reductase (441 aa).

Substrate is bound by residues 64-67, Ser123, 128-130, and Gln134; these read TCNR and ETQ. Cys65 (nucleophile) is an active-site residue. Residue 203–208 coordinates NADP(+); sequence GAGEMI.

Belongs to the glutamyl-tRNA reductase family. As to quaternary structure, homodimer.

The enzyme catalyses (S)-4-amino-5-oxopentanoate + tRNA(Glu) + NADP(+) = L-glutamyl-tRNA(Glu) + NADPH + H(+). It participates in porphyrin-containing compound metabolism; protoporphyrin-IX biosynthesis; 5-aminolevulinate from L-glutamyl-tRNA(Glu): step 1/2. In terms of biological role, catalyzes the NADPH-dependent reduction of glutamyl-tRNA(Glu) to glutamate 1-semialdehyde (GSA). The polypeptide is Glutamyl-tRNA reductase (Burkholderia pseudomallei (strain K96243)).